Consider the following 142-residue polypeptide: Large ribosomal subunit protein uL13 (142 aa).

Belongs to the universal ribosomal protein uL13 family. In terms of assembly, part of the 50S ribosomal subunit.

Its function is as follows. This protein is one of the early assembly proteins of the 50S ribosomal subunit, although it is not seen to bind rRNA by itself. It is important during the early stages of 50S assembly. This is Large ribosomal subunit protein uL13 from Pasteurella multocida (strain Pm70).